The following is a 376-amino-acid chain: Succinyl-diaminopimelate desuccinylase (376 aa).

Residue histidine 66 participates in Zn(2+) binding. Aspartate 68 is a catalytic residue. A Zn(2+)-binding site is contributed by aspartate 99. Glutamate 133 (proton acceptor) is an active-site residue. Positions 134, 162, and 349 each coordinate Zn(2+).

Belongs to the peptidase M20A family. DapE subfamily. In terms of assembly, homodimer. It depends on Zn(2+) as a cofactor. Co(2+) serves as cofactor.

The catalysed reaction is N-succinyl-(2S,6S)-2,6-diaminopimelate + H2O = (2S,6S)-2,6-diaminopimelate + succinate. It participates in amino-acid biosynthesis; L-lysine biosynthesis via DAP pathway; LL-2,6-diaminopimelate from (S)-tetrahydrodipicolinate (succinylase route): step 3/3. Functionally, catalyzes the hydrolysis of N-succinyl-L,L-diaminopimelic acid (SDAP), forming succinate and LL-2,6-diaminopimelate (DAP), an intermediate involved in the bacterial biosynthesis of lysine and meso-diaminopimelic acid, an essential component of bacterial cell walls. This chain is Succinyl-diaminopimelate desuccinylase, found in Buchnera aphidicola subsp. Cinara cedri (strain Cc).